The primary structure comprises 366 residues: A-type ATP synthase subunit C (366 aa).

This sequence belongs to the V-ATPase V0D/AC39 subunit family. In terms of assembly, has multiple subunits with at least A(3), B(3), C, D, E, F, H, I and proteolipid K(x).

Its subcellular location is the cell membrane. In terms of biological role, component of the A-type ATP synthase that produces ATP from ADP in the presence of a proton gradient across the membrane. This is A-type ATP synthase subunit C from Thermococcus gammatolerans (strain DSM 15229 / JCM 11827 / EJ3).